A 328-amino-acid polypeptide reads, in one-letter code: Phosphate acyltransferase (328 aa).

The protein belongs to the PlsX family. Homodimer. Probably interacts with PlsY.

The protein resides in the cytoplasm. It carries out the reaction a fatty acyl-[ACP] + phosphate = an acyl phosphate + holo-[ACP]. The protein operates within lipid metabolism; phospholipid metabolism. Catalyzes the reversible formation of acyl-phosphate (acyl-PO(4)) from acyl-[acyl-carrier-protein] (acyl-ACP). This enzyme utilizes acyl-ACP as fatty acyl donor, but not acyl-CoA. This chain is Phosphate acyltransferase, found in Campylobacter jejuni (strain RM1221).